We begin with the raw amino-acid sequence, 94 residues long: Co-chaperonin GroES (94 aa).

It belongs to the GroES chaperonin family. Heptamer of 7 subunits arranged in a ring. Interacts with the chaperonin GroEL.

The protein resides in the cytoplasm. Its function is as follows. Together with the chaperonin GroEL, plays an essential role in assisting protein folding. The GroEL-GroES system forms a nano-cage that allows encapsulation of the non-native substrate proteins and provides a physical environment optimized to promote and accelerate protein folding. GroES binds to the apical surface of the GroEL ring, thereby capping the opening of the GroEL channel. This Leuconostoc citreum (strain KM20) protein is Co-chaperonin GroES.